The primary structure comprises 679 residues: DNA ligase (679 aa).

Residues 86-90 and 129-130 contribute to the NAD(+) site; these read DEAYD and ST. Lysine 167 functions as the N6-AMP-lysine intermediate in the catalytic mechanism. 3 residues coordinate NAD(+): arginine 183, glutamate 214, and lysine 326. Zn(2+)-binding residues include cysteine 417, cysteine 420, cysteine 433, and cysteine 439. In terms of domain architecture, BRCT spans 599-679; the sequence is GEKSPISGKT…EAYRQLVSLD (81 aa).

The protein belongs to the NAD-dependent DNA ligase family. LigA subfamily. The cofactor is Mg(2+). Mn(2+) is required as a cofactor.

It carries out the reaction NAD(+) + (deoxyribonucleotide)n-3'-hydroxyl + 5'-phospho-(deoxyribonucleotide)m = (deoxyribonucleotide)n+m + AMP + beta-nicotinamide D-nucleotide.. Its function is as follows. DNA ligase that catalyzes the formation of phosphodiester linkages between 5'-phosphoryl and 3'-hydroxyl groups in double-stranded DNA using NAD as a coenzyme and as the energy source for the reaction. It is essential for DNA replication and repair of damaged DNA. The polypeptide is DNA ligase (Desulfotalea psychrophila (strain LSv54 / DSM 12343)).